Reading from the N-terminus, the 66-residue chain is Large ribosomal subunit protein uL29 (66 aa).

The protein belongs to the universal ribosomal protein uL29 family.

This is Large ribosomal subunit protein uL29 from Borrelia recurrentis (strain A1).